The sequence spans 62 residues: Single-pass membrane and coiled-coil domain-containing protein 4 homolog (62 aa).

A disordered region spans residues 1–27 (MRQLPGKAAKETRKMKRERKQQNKEGH). Residues 9-31 (AKETRKMKRERKQQNKEGHNRVV) are a coiled coil. A helical membrane pass occupies residues 30–50 (VVTVAIPVCLAVFVMLIVYVY).

It belongs to the SMCO4 family.

The protein resides in the membrane. The sequence is that of Single-pass membrane and coiled-coil domain-containing protein 4 homolog from Nematostella vectensis (Starlet sea anemone).